Consider the following 136-residue polypeptide: Large ribosomal subunit protein uL16 (136 aa).

It belongs to the universal ribosomal protein uL16 family. Part of the 50S ribosomal subunit.

Functionally, binds 23S rRNA and is also seen to make contacts with the A and possibly P site tRNAs. This is Large ribosomal subunit protein uL16 from Orientia tsutsugamushi (strain Ikeda) (Rickettsia tsutsugamushi).